The sequence spans 805 residues: Cation channel sperm-associated auxiliary subunit delta (805 aa).

The first 16 residues, 1-16 (MLVLMLAAAVATMVRA), serve as a signal peptide directing secretion. The Extracellular segment spans residues 17 to 723 (HTLCRVHTVR…ALPVTKFQPL (707 aa)). 7 disulfide bridges follow: Cys-20-Cys-366, Cys-56-Cys-143, Cys-142-Cys-149, Cys-384-Cys-493, Cys-507-Cys-701, Cys-522-Cys-569, and Cys-621-Cys-651. 5 N-linked (GlcNAc...) asparagine glycosylation sites follow: Asn-227, Asn-419, Asn-469, Asn-535, and Asn-627. A helical transmembrane segment spans residues 724 to 745 (LTILLMVTTTLLTAWLAYAIPK). At 746–805 (QLRSEKGQRLLGFCYQILQLCLGVCFCTWLRGKLRQWLRPRRVKDQNRGKVRVAQKHPET) the chain is on the cytoplasmic side.

This sequence belongs to the CATSPERD family. As to quaternary structure, component of the CatSper complex or CatSpermasome composed of the core pore-forming members CATSPER1, CATSPER2, CATSPER3 and CATSPER4 as well as auxiliary members CATSPERB, CATSPERG2, CATSPERD, CATSPERE, CATSPERZ, C2CD6/CATSPERT, SLCO6C1, TMEM249, TMEM262 and EFCAB9. HSPA1 may be an additional auxiliary complex member. The core complex members CATSPER1, CATSPER2, CATSPER3 and CATSPER4 form a heterotetrameric channel. The auxiliary CATSPERB, CATSPERG2, CATSPERD and CATSPERE subunits form a pavilion-like structure over the pore which stabilizes the complex through interactions with CATSPER4, CATSPER3, CATSPER1 and CATSPER2 respectively. SLCO6C1 interacts with CATSPERE and TMEM262/CATSPERH interacts with CATSPERB, further stabilizing the complex. C2CD6/CATSPERT interacts at least with CATSPERD and is required for targeting the CatSper complex in the flagellar membrane. In terms of tissue distribution, testis-specific.

The protein localises to the cell projection. Its subcellular location is the cilium. It is found in the flagellum membrane. Functionally, auxiliary component of the CatSper complex, a complex involved in sperm cell hyperactivation. Sperm cell hyperactivation is needed for sperm motility which is essential late in the preparation of sperm for fertilization. Required for CATSPER1 stability before intraflagellar transport and/or incorporation of the CatSper complex channel into the flagellar membrane. The polypeptide is Cation channel sperm-associated auxiliary subunit delta (Mus musculus (Mouse)).